Consider the following 55-residue polypeptide: Large ribosomal subunit protein bL33 (55 aa).

This sequence belongs to the bacterial ribosomal protein bL33 family.

The protein is Large ribosomal subunit protein bL33 of Aromatoleum aromaticum (strain DSM 19018 / LMG 30748 / EbN1) (Azoarcus sp. (strain EbN1)).